We begin with the raw amino-acid sequence, 239 residues long: MEIFPAIDLKEGRCVRLYQGEFSKETVMNEDPVAQAIIFEKLGAEILHIVDLDGAIAGESLNFLVIEKICKAVRIPVQVGGGIRSLKAVEKLLSVGVEKVILGTAALYDKSFLEEAVHLYKEKIIVGIDAKNGFVATRGWLDLSEISYISLAKQMESLGVQTIVFTDISKDGTLAGPNFEQLTLLQKSVGIRLIASGGVASIQDVKKLNDMNIYGVIIGKALYEKKIDLEEVLQVTKLC.

D8 serves as the catalytic Proton acceptor. D129 (proton donor) is an active-site residue.

The protein belongs to the HisA/HisF family.

It is found in the cytoplasm. It catalyses the reaction 1-(5-phospho-beta-D-ribosyl)-5-[(5-phospho-beta-D-ribosylamino)methylideneamino]imidazole-4-carboxamide = 5-[(5-phospho-1-deoxy-D-ribulos-1-ylimino)methylamino]-1-(5-phospho-beta-D-ribosyl)imidazole-4-carboxamide. Its pathway is amino-acid biosynthesis; L-histidine biosynthesis; L-histidine from 5-phospho-alpha-D-ribose 1-diphosphate: step 4/9. The sequence is that of 1-(5-phosphoribosyl)-5-[(5-phosphoribosylamino)methylideneamino] imidazole-4-carboxamide isomerase from Bacillus cereus (strain G9842).